Reading from the N-terminus, the 94-residue chain is Beta-defensin 132 (94 aa).

An N-terminal signal peptide occupies residues 1-22; that stretch reads MKFLLLVLAALGFLTQVIPASA. 2 cysteine pairs are disulfide-bonded: C27–C55 and C39–C56. The interval 72–94 is disordered; it reads GNHWQSRRNTQRKDKKQQTTVTS. Residues 76 to 86 show a composition bias toward basic residues; the sequence is QSRRNTQRKDK.

The protein belongs to the beta-defensin family.

The protein resides in the secreted. In terms of biological role, has antibacterial activity. This is Beta-defensin 132 (DEFB132) from Gorilla gorilla gorilla (Western lowland gorilla).